The primary structure comprises 211 residues: Uracil phosphoribosyltransferase (211 aa).

Residues Arg-81, Arg-106, and 133–141 (DPMLATGNS) contribute to the 5-phospho-alpha-D-ribose 1-diphosphate site. Uracil contacts are provided by residues Ile-196 and 201-203 (GDA). Asp-202 contributes to the 5-phospho-alpha-D-ribose 1-diphosphate binding site.

Belongs to the UPRTase family. Requires Mg(2+) as cofactor.

It carries out the reaction UMP + diphosphate = 5-phospho-alpha-D-ribose 1-diphosphate + uracil. It functions in the pathway pyrimidine metabolism; UMP biosynthesis via salvage pathway; UMP from uracil: step 1/1. Allosterically activated by GTP. In terms of biological role, catalyzes the conversion of uracil and 5-phospho-alpha-D-ribose 1-diphosphate (PRPP) to UMP and diphosphate. The protein is Uracil phosphoribosyltransferase of Myxococcus xanthus (strain DK1622).